The following is a 573-amino-acid chain: MHALTGLSLVSLLSFGYLSWDWAKPSLVADGPGEPGLEQPSAPPPQPPHIIFILTDDQGYHDVGYHGSDIETPTLDRLAAEGVKLENYYIQPICTPSRSQLLTGRYQIHTGLQHSIIRPRQPNCLPLDQVTLPQKLQEAGYSTHMVGKWHLGFYRKECLPTRRGFDTFLGSLTGNVDYYTYDNCDGPGVCGFDLHEGENVAWGLSGQYSTMLYAQRVSHILASHSPRRPLFLYVAFQAVHTPLQSPREYLYRYRTMGNVARRKYAAMVTCMDEAVRNITSALKRYGFYNNSVIIFSSDNGGQTFSGGSNWPLRGRKGTYWEGGVRGLGFVHSPLLKRKRRTSRALVHITDWYPTLVGLAGGTASAADGLDGYDVWPAISEGRASPRTEILHNIDPLYNHARHGSLEAGFGIWNTAVQAAIRVGEWKLLTGDPGYGDWIPPQTLAAFPGSWWNLERMASARQAVWLFNISADPYEREDLAGQRPDVVRALLARLVDYNRTAIPVRYPAENPRAHPDFNGGAWGPWASDEEEEEEEEEAGRARSFSRGRRKKKCKICKLRSFFRKLNTRLMSQRI.

The first 23 residues, 1-23 (MHALTGLSLVSLLSFGYLSWDWA), serve as a signal peptide directing secretion. Ca(2+) contacts are provided by Asp-56, Asp-57, and Cys-94. Cys-94 (nucleophile) is an active-site residue. Cys-94 is modified (3-oxoalanine (Cys)). Lys-148 provides a ligand contact to substrate. His-150 is an active-site residue. His-240 serves as a coordination point for substrate. 2 N-linked (GlcNAc...) asparagine glycosylation sites follow: Asn-277 and Asn-289. Ca(2+)-binding residues include Asp-298 and Asn-299. Residue Lys-316 coordinates substrate. N-linked (GlcNAc...) asparagine glycosylation is found at Asn-467 and Asn-497. The disordered stretch occupies residues 516 to 550 (FNGGAWGPWASDEEEEEEEEEAGRARSFSRGRRKK). The segment covering 526–536 (SDEEEEEEEEE) has biased composition (acidic residues).

It belongs to the sulfatase family. Ca(2+) is required as a cofactor. The oxidation of Cys-94 residue to 3-oxoalanine (also known as C(alpha)-formylglycine) by SUMF1/Sulfatase-modifying factor 1, seems critical for catalytic activity.

It localises to the secreted. It is found in the endoplasmic reticulum. Functionally, displays arylsulfatase activity at neutral pH, when co-expressed with SUMF1; arylsulfatase activity is measured in the secretion medium of retinal cell line, but no activity is recorded when measured in cell extracts. The polypeptide is Arylsulfatase I (ARSI) (Canis lupus familiaris (Dog)).